We begin with the raw amino-acid sequence, 406 residues long: Bifunctional protein GlmU (406 aa).

Residues 1-221 (MFIILAAGHG…EEEATGINSR (221 aa)) are pyrophosphorylase. Residues 5–8 (LAAG), K19, Q68, 73–74 (GT), 98–100 (YGD), G134, E148, N162, and N219 contribute to the UDP-N-acetyl-alpha-D-glucosamine site. Residue D100 coordinates Mg(2+). N219 contacts Mg(2+). Positions 222–242 (NDLAKAEFYFQENRRKFFTDS) are linker. Residues 243-406 (GVTLVAPETV…RRKQMVKKIK (164 aa)) are N-acetyltransferase. K308 lines the UDP-N-acetyl-alpha-D-glucosamine pocket. Residue H320 is the Proton acceptor of the active site. UDP-N-acetyl-alpha-D-glucosamine-binding residues include Y323 and N334. Residues A337, 343 to 344 (NY), A380, and R397 contribute to the acetyl-CoA site.

In the N-terminal section; belongs to the N-acetylglucosamine-1-phosphate uridyltransferase family. This sequence in the C-terminal section; belongs to the transferase hexapeptide repeat family. In terms of assembly, homotrimer. Mg(2+) serves as cofactor.

It localises to the cytoplasm. It catalyses the reaction alpha-D-glucosamine 1-phosphate + acetyl-CoA = N-acetyl-alpha-D-glucosamine 1-phosphate + CoA + H(+). The catalysed reaction is N-acetyl-alpha-D-glucosamine 1-phosphate + UTP + H(+) = UDP-N-acetyl-alpha-D-glucosamine + diphosphate. It participates in nucleotide-sugar biosynthesis; UDP-N-acetyl-alpha-D-glucosamine biosynthesis; N-acetyl-alpha-D-glucosamine 1-phosphate from alpha-D-glucosamine 6-phosphate (route II): step 2/2. It functions in the pathway nucleotide-sugar biosynthesis; UDP-N-acetyl-alpha-D-glucosamine biosynthesis; UDP-N-acetyl-alpha-D-glucosamine from N-acetyl-alpha-D-glucosamine 1-phosphate: step 1/1. The protein operates within bacterial outer membrane biogenesis; LPS lipid A biosynthesis. In terms of biological role, catalyzes the last two sequential reactions in the de novo biosynthetic pathway for UDP-N-acetylglucosamine (UDP-GlcNAc). The C-terminal domain catalyzes the transfer of acetyl group from acetyl coenzyme A to glucosamine-1-phosphate (GlcN-1-P) to produce N-acetylglucosamine-1-phosphate (GlcNAc-1-P), which is converted into UDP-GlcNAc by the transfer of uridine 5-monophosphate (from uridine 5-triphosphate), a reaction catalyzed by the N-terminal domain. This is Bifunctional protein GlmU from Wolbachia sp. subsp. Brugia malayi (strain TRS).